We begin with the raw amino-acid sequence, 408 residues long: Peptidase T (408 aa).

Histidine 78 contacts Zn(2+). Aspartate 80 is a catalytic residue. Residue aspartate 140 coordinates Zn(2+). Residue glutamate 174 is the Proton acceptor of the active site. The Zn(2+) site is built by glutamate 175, aspartate 197, and histidine 379.

Belongs to the peptidase M20B family. Zn(2+) is required as a cofactor.

The protein resides in the cytoplasm. The catalysed reaction is Release of the N-terminal residue from a tripeptide.. Its function is as follows. Cleaves the N-terminal amino acid of tripeptides. This Staphylococcus aureus (strain Mu3 / ATCC 700698) protein is Peptidase T.